We begin with the raw amino-acid sequence, 784 residues long: Kinesin-like protein 6 (784 aa).

The region spanning 6 to 389 (SISVAVRVRP…LKYGNRAKNI (384 aa)) is the Kinesin motor domain. 134 to 141 (GATGCGKT) provides a ligand contact to ATP. 2 coiled-coil regions span residues 405-440 (SEYV…EVRK) and 463-483 (RDLQ…EDEI). The segment at 677-715 (SEVPTTSSVPPVEIKNKDSKPKVEKSLDKHNMNNDRSFL) is disordered. Basic and acidic residues predominate over residues 690-709 (IKNKDSKPKVEKSLDKHNMN).

Belongs to the TRAFAC class myosin-kinesin ATPase superfamily. Kinesin family. Kinesin II subfamily. As to quaternary structure, heterodimer with klp5.

It is found in the cytoplasm. The protein localises to the cytoskeleton. The protein resides in the chromosome. It localises to the centromere. Its subcellular location is the kinetochore. It is found in the spindle. Has a role in establishing metaphase during mitosis. Required for chromosome segregation where it generates tension during kinetochore capturing. This chain is Kinesin-like protein 6 (klp6), found in Schizosaccharomyces pombe (strain 972 / ATCC 24843) (Fission yeast).